Reading from the N-terminus, the 725-residue chain is Exocyst complex component 8 (725 aa).

Position 19 is a phosphoserine (Ser-19). The disordered stretch occupies residues 116–159 (AASGGEEGGGGAGGRDQLRGQTGFFPSPGGASRDGSGPGEEGKQ). Residues 120–129 (GEEGGGGAGG) show a composition bias toward gly residues. In terms of domain architecture, PH spans 182 to 282 (YLVYNGDLVE…WLEVLEETKR (101 aa)). Residues 285-322 (SEKRRREQEEAAAPRGPPQVTPKASNPFEDEDDDEPTV) form a disordered region. Residues 312-322 (FEDEDDDEPTV) show a composition bias toward acidic residues.

The protein belongs to the EXO84 family. In terms of assembly, the exocyst complex is composed of EXOC1, EXOC2, EXOC3, EXOC4, EXOC5, EXOC6, EXOC7 and EXOC8. Interacts (via PH domain) with GTP-bound RALA and RALB. Interacts with SH3BP1; required for the localization of both SH3BP1 and the exocyst to the leading edge of migrating cells.

It localises to the cytoplasm. The protein resides in the perinuclear region. It is found in the cell projection. Its subcellular location is the growth cone. Component of the exocyst complex involved in the docking of exocytic vesicles with fusion sites on the plasma membrane. The protein is Exocyst complex component 8 (EXOC8) of Bos taurus (Bovine).